Reading from the N-terminus, the 431-residue chain is Protein PIN-LIKES 6 (431 aa).

Residues 1 to 29 (MIARILAALADSMEMPVAAGGGSVLGTIK) are Lumenal-facing. A helical transmembrane segment spans residues 30 to 50 (IAVMPIAKVFTMCFLGLLMAS). The Cytoplasmic segment spans residues 51–66 (KYVNILPPSGRKLLNG). A helical transmembrane segment spans residues 67-87 (LVFSLLLPCLIFSQLGQAVTL). At 88–93 (QKMLQW) the chain is on the lumenal side. Residues 94-114 (WFIPVNVVLGTISGSIIGFIV) traverse the membrane as a helical segment. Residues 115-128 (ASIVRPPYPYFKFT) are Cytoplasmic-facing. A helical transmembrane segment spans residues 129–149 (IIQIGVGNIGNVPLVLLAALC). The Lumenal segment spans residues 150–169 (RDTSNPFGDSEKCSIDGTAY). A helical membrane pass occupies residues 170 to 190 (ISFGQWVGAIILYTYVYQMFA). At 191–268 (PPPEGFDAEE…FLYEKLKLKQ (78 aa)) the chain is on the cytoplasmic side. Residues 269-289 (IVQPAIVASILAMILGAIPFT) traverse the membrane as a helical segment. The Lumenal portion of the chain corresponds to 290-306 (KKLIFTNGAPLFFFTDS). Residues 307-327 (CMILGDAMIPCILLALGGNLI) traverse the membrane as a helical segment. Over 328–340 (NGPGSSKLGFKTT) the chain is Cytoplasmic. Residues 341 to 361 (AAIIIGRLVLVPPVGLGIVTV) traverse the membrane as a helical segment. Residues 362–376 (ADKLGFLPADDKMFR) are Lumenal-facing. Residues 377 to 397 (FVLLLQHTMPTSVLSGAVANL) traverse the membrane as a helical segment. The Cytoplasmic portion of the chain corresponds to 398 to 406 (RGCGRESAA). A helical membrane pass occupies residues 407–427 (VLFWVHIFAIFSMAGWMVLYI). Residues 428 to 431 (NILF) lie on the Lumenal side of the membrane.

It belongs to the auxin efflux carrier (TC 2.A.69.2) family. Expressed in seedlings, rosette and cauline leaves, stems and flowers.

The protein resides in the endoplasmic reticulum membrane. Involved in cellular auxin homeostasis by regulating auxin metabolism. Regulates intracellular auxin accumulation at the endoplasmic reticulum and thus auxin availability for nuclear auxin signaling. This is Protein PIN-LIKES 6 from Arabidopsis thaliana (Mouse-ear cress).